We begin with the raw amino-acid sequence, 57 residues long: uncharacterized protein (57 aa).

This is an uncharacterized protein from Homo sapiens (Human).